A 304-amino-acid polypeptide reads, in one-letter code: Ribonuclease Z (304 aa).

Zn(2+)-binding residues include histidine 63, histidine 65, aspartate 67, histidine 68, histidine 141, aspartate 208, and histidine 266. The Proton acceptor role is filled by aspartate 67.

It belongs to the RNase Z family. As to quaternary structure, homodimer. It depends on Zn(2+) as a cofactor.

The enzyme catalyses Endonucleolytic cleavage of RNA, removing extra 3' nucleotides from tRNA precursor, generating 3' termini of tRNAs. A 3'-hydroxy group is left at the tRNA terminus and a 5'-phosphoryl group is left at the trailer molecule.. Functionally, zinc phosphodiesterase, which displays some tRNA 3'-processing endonuclease activity. Probably involved in tRNA maturation, by removing a 3'-trailer from precursor tRNA. This Chlamydia trachomatis serovar D (strain ATCC VR-885 / DSM 19411 / UW-3/Cx) protein is Ribonuclease Z.